A 128-amino-acid chain; its full sequence is RxLR effector protein SFI2 (128 aa).

The signal sequence occupies residues 1 to 22; the sequence is MRSAFYIFLVVAVLARCSVVAA. Positions 52-71 match the RxLR-dEER motif; the sequence is RLLRVAGREDDDATTDEEDR.

Belongs to the RxLR effector family.

The protein localises to the secreted. Its subcellular location is the host nucleus. In terms of biological role, effector that suppresses flg22-induced post-translational MAP kinase activation both tomato and Arabidopsis. The perception of highly conserved pathogen- or microbe-associated molecular patterns (PAMPs/MAMPs), such as flg22, triggers converging signaling pathways recruiting MAP kinase cascades and inducing transcriptional re-programming, yielding a generic antimicrobial response. The chain is RxLR effector protein SFI2 from Phytophthora infestans (strain T30-4) (Potato late blight agent).